The following is an 815-amino-acid chain: MSRAIIENAGEHRVSILINGMYPIDNINDVKMAYRDLLTDEDMFIFSAVAPTAYRHIENHGRSKAAQAARDIAIANIAPDIVYVISFFEGHSDSYTVSIPADNVPWKTVCVCHDLIPLLNKERYLGDPNFREFYMNKLAEFERADAIFAISQSAAQEVIEYTDIASDRVLNISSAVGEEFAVIDYSAERIQSLKDKYSLPDEFILSLAMIEPRKNIEALIHAYSLLPAELQQRYPMVLAYKVQPEQLERILRLAESYGLSRSQLIFTGFLTDDDLIALYNLCKLFVFPSLHEGFGLPPLEAMRCGAATLGSNITSLPEVIGWEDAMFNPHDVQDIRRVMEKALTDEAFYRELKAHALAQSAKFSWANTAHLAIEGFTRLLQSSQETDAGQAESVTASRLQMMQKIDALSEVDRLGLAWAVARNSFKRHTRKLLVDISVLAHDDAKTGIQRVSRSILSELLKSGVPGYEVSAVYYTPGECYRYANQYLSSHFPGEFGADEPVLFSKDDVLIATDLTAHLFPELVTQIDSMRAAGAFACFVVHDILPLRRPEWSIEGIQRDFPIWLSCLAEHADRLICVSASVAEDVKAWIAENRHWVKPNPLQTVSNFHLGADLDASVPSTGMPDNAQALLAAMAAAPSFIMVGTMEPRKGHAQTLAAFEELWREGKDYNLFIVGKQGWNVDSLCEKLRHHPQLNKKLFWLQNISDEFLAELYARSRALIFASQGEGFGLPLIEAAQKKLPVIIRDIPVFKEIAQEHAWYFSGEAPSDIAKAVEEWLALYEQNAHPRSENINWLTWKQSAEFLLKNLPIIAPAAKQ.

Positions 1–374 (MSRAIIENAG…WANTAHLAIE (374 aa)) are alpha-(1-&gt;2)-mannosyltransferase. An alpha-(1-&gt;3)-mannosyltransferase region spans residues 431–804 (KLLVDISVLA…WKQSAEFLLK (374 aa)).

It belongs to the glycosyltransferase group 1 family. Glycosyltransferase 4 subfamily. In terms of assembly, monomer. Interacts with the C-terminal region of WbdD.

Its subcellular location is the cell inner membrane. The catalysed reaction is [alpha-D-Man-(1-&gt;3)-alpha-D-Man-(1-&gt;3)-alpha-D-Man-(1-&gt;2)-alpha-D-Man-(1-&gt;2)](n)-alpha-D-Man-(1-&gt;3)-alpha-D-Man-(1-&gt;3)-alpha-D-Man-(1-&gt;3)-alpha-D-GlcNAc-di-trans,octa-cis-undecaprenyl diphosphate + 2 GDP-alpha-D-mannose = alpha-D-Man-(1-&gt;2)-alpha-D-Man-(1-&gt;2)-[alpha-D-Man-(1-&gt;3)-alpha-D-Man-(1-&gt;3)-alpha-D-Man-(1-&gt;2)-alpha-D-Man-(1-&gt;2)](n)-alpha-D-Man-(1-&gt;3)-alpha-D-Man-(1-&gt;3)-alpha-D-Man-(1-&gt;3)-alpha-D-GlcNAc-di-trans,octa-cis-undecaprenyl diphosphate + 2 GDP + 2 H(+). It catalyses the reaction alpha-D-Man-(1-&gt;2)-alpha-D-Man-(1-&gt;2)-[alpha-D-Man-(1-&gt;3)-alpha-D-Man-(1-&gt;3)-alpha-D-Man-(1-&gt;2)-alpha-D-Man-(1-&gt;2)](n)-alpha-D-Man-(1-&gt;3)-alpha-D-Man-(1-&gt;3)-alpha-D-Man-(1-&gt;3)-alpha-D-GlcNAc-di-trans,octa-cis-undecaprenyl diphosphate + 2 GDP-alpha-D-mannose = [alpha-D-Man-(1-&gt;3)-alpha-D-Man-(1-&gt;3)-alpha-D-Man-(1-&gt;2)-alpha-D-Man-(1-&gt;2)](n+1)-alpha-D-Man-(1-&gt;3)-alpha-D-Man-(1-&gt;3)-alpha-D-Man-(1-&gt;3)-alpha-D-GlcNAc-di-trans,octa-cis-undecaprenyl diphosphate + 2 GDP + 2 H(+). It participates in bacterial outer membrane biogenesis; LPS O-antigen biosynthesis. Functionally, mannosyltransferase involved in the biosynthesis of the repeat unit of the lipopolysaccharide (LPS) O-antigen region. Catalyzes the polymerization of a tetrasaccharide repeat unit containing two alpha-(1-&gt;3)- and two alpha-(1-&gt;2)-linked mannopyranose residues. This is Serotype-specific mannosyltransferase WbdA from Escherichia coli.